Reading from the N-terminus, the 232-residue chain is Ribose-5-phosphate isomerase A (232 aa).

Substrate contacts are provided by residues 29–32 (SGST), 86–89 (DGAD), and 99–102 (KGGG). Glu-108 (proton acceptor) is an active-site residue. Lys-126 contacts substrate.

The protein belongs to the ribose 5-phosphate isomerase family. As to quaternary structure, homodimer.

It carries out the reaction aldehydo-D-ribose 5-phosphate = D-ribulose 5-phosphate. It participates in carbohydrate degradation; pentose phosphate pathway; D-ribose 5-phosphate from D-ribulose 5-phosphate (non-oxidative stage): step 1/1. Catalyzes the reversible conversion of ribose-5-phosphate to ribulose 5-phosphate. In Synechococcus sp. (strain ATCC 27144 / PCC 6301 / SAUG 1402/1) (Anacystis nidulans), this protein is Ribose-5-phosphate isomerase A.